Consider the following 606-residue polypeptide: MNLFSSLTLVTLILLTMPIAAINFNTHKFTNYPLYVKTTISCAFITSMIPTMMFIHTGQEMIISNWHWLTIQTLKLSLSFKMDFFSMMFVPVALFVTWSIMEFSMWYMHSDPNINQFFKYLLLFLITMLILVTANNLFQLFIGWEGVGIMSFLLIGWWYGRTDANTAALQAILYNRIGDIGFILAMAWFLINLNTWDLQQIFMLNPNDSNLPLMGLILAATGKSAQFGLHPWLPSAMEGPTPVSALLHSSTMVVAGIFLLIRFYPLTENNKFGQSIMLCLGAMTTLFTAMCALTQNDIKKIIAFSTSSQLGLMMVTIGINQPHLAFLHICTHAFFKAMLFMCSGSIIHSLNDEQDIRKMGGLFKAMPFTTTALIIGSLALTGMPFLTGFYSKDLIIESANTSYTNAWALLMTLVATSFTAIYSTRIIFFALLGQPRFPTLININENNPFLINSIKRLLIGSLFAGFIISNNIPPMTIPQMTMPHYLKMTALTVTILGFILALEISNTTHYLKFNYPSNTFKFSNLLGYYPTIMHRLTPYMNLTMSQKSASSLLDLIWLETILPKTISLAQMKMSTTITSQKGLIKLYFLSFLITILISTTLLNFHE.

Transmembrane regions (helical) follow at residues Phe-4–Phe-24, Ala-43–Ile-63, Phe-84–Ser-104, Ile-114–Ala-134, Leu-140–Gly-160, Ala-171–Ile-191, Leu-213–Leu-233, Thr-241–Ile-261, Phe-272–Ala-292, Ile-301–Asn-320, Ala-325–Ile-347, Met-366–Leu-386, Leu-413–Gly-433, Leu-457–Ile-477, Tyr-485–Ser-505, and Gly-582–Leu-602.

It belongs to the complex I subunit 5 family. Core subunit of respiratory chain NADH dehydrogenase (Complex I) which is composed of 45 different subunits.

Its subcellular location is the mitochondrion inner membrane. It carries out the reaction a ubiquinone + NADH + 5 H(+)(in) = a ubiquinol + NAD(+) + 4 H(+)(out). Its function is as follows. Core subunit of the mitochondrial membrane respiratory chain NADH dehydrogenase (Complex I) which catalyzes electron transfer from NADH through the respiratory chain, using ubiquinone as an electron acceptor. Essential for the catalytic activity and assembly of complex I. This is NADH-ubiquinone oxidoreductase chain 5 (MT-ND5) from Ovis aries (Sheep).